We begin with the raw amino-acid sequence, 235 residues long: (5-formylfuran-3-yl)methyl phosphate synthase (235 aa).

The Schiff-base intermediate with substrate role is filled by K27. Catalysis depends on K85, which acts as the Proton acceptor.

The protein belongs to the MfnB family. In terms of assembly, homohexamer. Trimer of dimers.

It carries out the reaction 2 D-glyceraldehyde 3-phosphate = 4-(hydroxymethyl)-2-furancarboxaldehyde phosphate + phosphate + 2 H2O. Its pathway is cofactor biosynthesis; methanofuran biosynthesis. In terms of biological role, catalyzes the formation of 4-(hydroxymethyl)-2-furancarboxaldehyde phosphate (4-HFC-P) from two molecules of glyceraldehyde-3-P (GA-3-P). The sequence is that of (5-formylfuran-3-yl)methyl phosphate synthase from Methanocaldococcus jannaschii (strain ATCC 43067 / DSM 2661 / JAL-1 / JCM 10045 / NBRC 100440) (Methanococcus jannaschii).